The following is a 1080-amino-acid chain: Presequence protease 1, chloroplastic/mitochondrial (1080 aa).

Residues 1–85 constitute a chloroplast and mitochondrion transit peptide; the sequence is MLRTVSCLAS…GQFSRLSVRA (85 aa). Val-86 carries the N-acetylvaline modification. His-162 contacts Zn(2+). Catalysis depends on Glu-165, which acts as the Proton acceptor. His-166 lines the Zn(2+) pocket. Glu-240 is an active-site residue. Residue Glu-262 participates in Zn(2+) binding. Residues 571–612 adopt a coiled-coil conformation; the sequence is EKATQEEVEEKNILEKVKAAMTEEDLAELARATEELKLKQET. Arg-705 is a Mg(2+) binding site.

Belongs to the peptidase M16 family. PreP subfamily. Homodimer. The cofactor is Zn(2+). It depends on Mg(2+) as a cofactor. In terms of tissue distribution, expressed only in siliques and flowers.

It localises to the plastid. It is found in the chloroplast stroma. The protein resides in the mitochondrion matrix. Inactive in the absence of MgCl(2) and CaCl(2) and full activation at 10 mM concentrations of either ion. Completely inhibited by the metal chelator orthophenanthroline, but not affected by phenylmethylsulfonyl fluoride (PMSF) or N-ethylmaleimide (NEM). In terms of biological role, ATP-independent protease that degrades both mitochondrial and chloroplastic transit peptides after their cleavage. Also degrades other unstructured peptides. Specific for peptides in the range of 10 to 65 residues. Shows a preference for cleavage after small polar residues and before basic residues, with a bias for positively charged amino acid residues. In Arabidopsis thaliana (Mouse-ear cress), this protein is Presequence protease 1, chloroplastic/mitochondrial (PREP1).